The primary structure comprises 425 residues: MLDIKWIRENPEKLDEALASRGIEPHAERLIALDLERRSHVVEVQCAQERRNSASKEIRQALAAGDQKTVERIKAEVEEIKTFLSSAAIKEKRLTESLEKILSAIPNIPLDSVPKGENEEANIVIRHFGTPPTFNFIPKEHFDLGQNLKQMNFERASRLSGARFTVLSGALARLERALGQFMLDVHVNEHGYEEISLPLLVRDEIVYGAAQLPKFSDDLFRTTDGRWLISTAEVPLVNLVNGEVLHESDLPLRFSSLTPCFRSEAGAAGRDTRGMLRQHQFWKVEMVSITTEEQSLIELERMTECAEDVLKRLELPFRTVVLSTGDMGFASCKTYDIEVWLPGQGCYREISSCSVCGDFQGRRMNARYRKDGDKTLHFVHSLNGSGTAIGRCLIAILENYQQADGSIIIPGALQPYMKGISRITA.

231–233 (TAE) lines the L-serine pocket. An ATP-binding site is contributed by 262–264 (RSE). E285 is an L-serine binding site. 349 to 352 (EISS) is an ATP binding site. Residue S385 participates in L-serine binding.

The protein belongs to the class-II aminoacyl-tRNA synthetase family. Type-1 seryl-tRNA synthetase subfamily. In terms of assembly, homodimer. The tRNA molecule binds across the dimer.

Its subcellular location is the cytoplasm. It catalyses the reaction tRNA(Ser) + L-serine + ATP = L-seryl-tRNA(Ser) + AMP + diphosphate + H(+). The enzyme catalyses tRNA(Sec) + L-serine + ATP = L-seryl-tRNA(Sec) + AMP + diphosphate + H(+). It participates in aminoacyl-tRNA biosynthesis; selenocysteinyl-tRNA(Sec) biosynthesis; L-seryl-tRNA(Sec) from L-serine and tRNA(Sec): step 1/1. Catalyzes the attachment of serine to tRNA(Ser). Is also able to aminoacylate tRNA(Sec) with serine, to form the misacylated tRNA L-seryl-tRNA(Sec), which will be further converted into selenocysteinyl-tRNA(Sec). This Bartonella bacilliformis (strain ATCC 35685 / KC583 / Herrer 020/F12,63) protein is Serine--tRNA ligase.